The sequence spans 309 residues: MILTVTLNPAIDVSYPLDELKCDTVNRVVDVTKTPGGKGLNVSRVLNDFGETVKATGCVGGESGDFIINHLPDSILSRFYKISGDTRTCIAILHEGNQTEILEKGPLLSVDEIDGFTHQFKYLLNDVDVVTMSGSLPAGMPDDYYQKLIKIANLNGKKTVLDCSGNALEAVLKGDSKPTVIKPNLEELSQLLGKEMTKDFEALKEVLQDELFEGIEWIIVSLGADGVFAKHKDTFYNVDIPKIKIVSAVGSGDSTVAGIASGLANDEDDRALLTKANVLGMLNAQEKTTGHVNMANYDKLYQSIKVKEV.

The protein belongs to the carbohydrate kinase PfkB family. LacC subfamily.

The catalysed reaction is D-tagatofuranose 6-phosphate + ATP = D-tagatofuranose 1,6-bisphosphate + ADP + H(+). It participates in carbohydrate metabolism; D-tagatose 6-phosphate degradation; D-glyceraldehyde 3-phosphate and glycerone phosphate from D-tagatose 6-phosphate: step 1/2. In Streptococcus pyogenes serotype M12 (strain MGAS2096), this protein is Tagatose-6-phosphate kinase.